The primary structure comprises 486 residues: Solute carrier family 2, facilitated glucose transporter member 5 (486 aa).

Methionine 1 bears the N-acetylmethionine mark. Residues 1 to 19 (MEQEGQEKKKEGRLTLVLA) lie on the Cytoplasmic side of the membrane. The chain crosses the membrane as a helical span at residues 20 to 40 (LRTLIAAFGSSFQYAYNVSVC). A D-fructose-binding site is contributed by tyrosine 33. Residues 41–69 (NSPSELMTEFYNDTYYDRTGELIDEFPLT) lie on the Extracellular side of the membrane. An N-linked (GlcNAc...) asparagine glycan is attached at asparagine 52. The chain crosses the membrane as a helical span at residues 70 to 92 (LLWSVTVSMFPSGGFAGSLLVGP). Residues 93–99 (LVNKFGR) are Cytoplasmic-facing. Residues 100-120 (KGALLFNNIFSIVPAILMGCS) traverse the membrane as a helical segment. Over 121–127 (KVARSFE) the chain is Extracellular. A helical membrane pass occupies residues 128 to 150 (LIIISRLLVGICAGVSSNVVPMY). Topologically, residues 151–162 (LGELAPKNLRGA) are cytoplasmic. The helical transmembrane segment at 163 to 183 (LGVESQLFITLGILVAQIFGL) threads the bilayer. Position 168 (glutamine 168) interacts with D-fructose. Residues 184-192 (RSIRQQKGW) lie on the Extracellular side of the membrane. A helical transmembrane segment spans residues 193–211 (PILLGLTGGPAAAACPPFF). Residues 212–274 (PESPRYLLIG…LCAMRGLAWQ (63 aa)) are Cytoplasmic-facing. Residues 275-294 (LISVVPLMWQQLSGVNAIYY) traverse the membrane as a helical segment. Residues glutamine 284 and 292–294 (IYY) contribute to the D-fructose site. At 295–306 (YDQIYLSPLDTD) the chain is on the extracellular side. The helical transmembrane segment at 307–327 (TQYYTAATGAVNVLMTVCTVF) threads the bilayer. At 328–334 (VVESWAR) the chain is on the cytoplasmic side. A helical membrane pass occupies residues 335–355 (LLLLLGFSPLAPTCCVLTAAL). Topologically, residues 356–363 (ALQDTVSW) are extracellular. Residues 364 to 385 (MPYISIVCIIVYVIGHAIGPAI) form a helical membrane-spanning segment. Histidine 379 contributes to the D-fructose binding site. Topologically, residues 386–402 (RSLYTEIFLQSGRPPTW) are cytoplasmic. A helical membrane pass occupies residues 403–421 (WGQVHWLSNFTVGLVFPLI). 407-408 (HW) is a D-fructose binding site. At 422 to 426 (QWAGL) the chain is on the extracellular side. The chain crosses the membrane as a helical span at residues 427-447 (YSFIIFGVACLSTTVYTFLIV). Residues 448–486 (PETKGKSFIEIIRRFIRMNKVEVSPDREELKDFPPDVSE) are Cytoplasmic-facing.

Belongs to the major facilitator superfamily. Sugar transporter (TC 2.A.1.1) family. Glucose transporter subfamily. Detected in jejunum. Detected at the intestinal brush-border membrane (at protein level). Detected in duodenum, jejunum and kidney.

The protein localises to the apical cell membrane. It is found in the cell membrane. It localises to the sarcolemma. It carries out the reaction D-fructose(out) = D-fructose(in). In terms of biological role, functions as a fructose transporter that has only low activity with other monosaccharides. Can mediate the uptake of deoxyglucose, but with low efficiency. Essential for fructose uptake in the small intestine. Plays a role in the regulation of salt uptake and blood pressure in response to dietary fructose. Required for the development of high blood pressure in response to high dietary fructose intake. The polypeptide is Solute carrier family 2, facilitated glucose transporter member 5 (Oryctolagus cuniculus (Rabbit)).